The primary structure comprises 129 residues: MVLNLIIPQEWNILPCATLQVELLRIIRAKKKSDLTSAGVVGYYNDVVAESMDFFDCLWFRKLEDTSKEPDFHRYSLMIVPMVPSSAADSDDSSSCSECDSDALLSDDGPCSTCDECHDSDRYELSSDC.

Residues 85-108 show a composition bias toward low complexity; that stretch reads SSAADSDDSSSCSECDSDALLSDD. The segment at 85–110 is disordered; it reads SSAADSDDSSSCSECDSDALLSDDGP.

This is an uncharacterized protein from Microplitis demolitor (Parasitoid wasp).